A 154-amino-acid polypeptide reads, in one-letter code: MAARLCCQLDPARDVLCLRPVGAESRGRPFSGSLGTLSSPSPSAVPTDHGAHLSLRGLPVCAFSSAGPCALRFTSARRMETTVNAHQILPKVLHKRTLGLSAMSTTDLEAYFKDCLFKDWEELGEEIRLKVFVLGGCRHKLVCAPAPCNFFTSA.

Residues 68–117 (PCALRFTSARRMETTVNAHQILPKVLHKRTLGLSAMSTTDLEAYFKDCLF) form a mitochondrial targeting sequence region.

It belongs to the orthohepadnavirus protein X family. As to quaternary structure, may form homodimer. May interact with host CEBPA, CFLAR, CREB1, DDB1, E4F1, HBXIP, HSPD1/HSP60, NFKBIA, POLR2E and SMAD4. Interacts with host SMC5-SMC6 complex and induces its degradation. Interacts with host TRPC4AP; leading to prevent ubiquitination of TRPC4AP. Interacts with host PLSCR1; this interaction promotes ubiquitination and degradation of HBx and impairs HBx-mediated cell proliferation. In terms of processing, a fraction may be phosphorylated in insect cells and HepG2 cells, a human hepatoblastoma cell line. Phosphorylated in vitro by host protein kinase C or mitogen-activated protein kinase. N-acetylated in insect cells.

The protein resides in the host cytoplasm. It is found in the host nucleus. It localises to the host mitochondrion. In terms of biological role, multifunctional protein that plays a role in silencing host antiviral defenses and promoting viral transcription. Does not seem to be essential for HBV infection. May be directly involved in development of cirrhosis and liver cancer (hepatocellular carcinoma). Most of cytosolic activities involve modulation of cytosolic calcium. The effect on apoptosis is controversial depending on the cell types in which the studies have been conducted. May induce apoptosis by localizing in mitochondria and causing loss of mitochondrial membrane potential. May also modulate apoptosis by binding host CFLAR, a key regulator of the death-inducing signaling complex (DISC). Promotes viral transcription by using the host E3 ubiquitin ligase DDB1 to target the SMC5-SMC6 complex to proteasomal degradation. This host complex would otherwise bind to viral episomal DNA, and prevents its transcription. Moderately stimulates transcription of many different viral and cellular transcription elements. Promoters and enhancers stimulated by HBx contain DNA binding sites for NF-kappa-B, AP-1, AP-2, c-EBP, ATF/CREB, or the calcium-activated factor NF-AT. This Hepatitis B virus genotype D subtype ayw (isolate France/Tiollais/1979) (HBV-D) protein is Protein X.